A 340-amino-acid chain; its full sequence is Phosphate acyltransferase (340 aa).

This sequence belongs to the PlsX family. As to quaternary structure, homodimer. Probably interacts with PlsY.

The protein localises to the cytoplasm. It carries out the reaction a fatty acyl-[ACP] + phosphate = an acyl phosphate + holo-[ACP]. Its pathway is lipid metabolism; phospholipid metabolism. Catalyzes the reversible formation of acyl-phosphate (acyl-PO(4)) from acyl-[acyl-carrier-protein] (acyl-ACP). This enzyme utilizes acyl-ACP as fatty acyl donor, but not acyl-CoA. The protein is Phosphate acyltransferase of Pseudomonas savastanoi pv. phaseolicola (strain 1448A / Race 6) (Pseudomonas syringae pv. phaseolicola (strain 1448A / Race 6)).